A 188-amino-acid polypeptide reads, in one-letter code: Large ribosomal subunit protein bL35m (188 aa).

It belongs to the bacterial ribosomal protein bL35 family.

The protein resides in the mitochondrion. In Bos taurus (Bovine), this protein is Large ribosomal subunit protein bL35m (MRPL35).